A 429-amino-acid polypeptide reads, in one-letter code: MAAIIVVGAQWGDEGKGKATDILGGKVDYVVKPNGGNNAGHTVVVGGEKYELKLLPAGVLSENATPIIGNGCVVNLEALFEEIDGLEARGANASRLRVSANAQLVAPYHVAIDRVAERFLGKRAIGTTGRGIGPTYADKVSRVGIRAQDLLDESILRQKIESALDQKNQILVKIYNRRAVDVDEVVEYFLSYADRLKPMLIDATTELNKALDAGKSVLMEGGQATMLDVDHGTYPFVTSSNPTTGGACVGTGIGPTRITASLGIIKAYTTRVGAGPFPTELFDKWGEFLQTTGGEVGVNTGRKRRCGWYDSVIARYASRVNGFTDYFLTKLDVLTGIGEIPICVAYDVDGVRHDEMPMTQTEFHHATPIYETMPAWDEDITDCKTFEELPEKAQDYVKRLEELSGCRISYIGVGPGRDQTIVINDVAEG.

GTP-binding positions include 12 to 18 and 40 to 42; these read GDEGKGK and GHT. Asp-13 acts as the Proton acceptor in catalysis. Mg(2+) is bound by residues Asp-13 and Gly-40. Residues 13-16, 38-41, Thr-128, Arg-142, Gln-223, Thr-238, and Arg-302 contribute to the IMP site; these read DEGK and NAGH. The Proton donor role is filled by His-41. 298–304 serves as a coordination point for substrate; that stretch reads VNTGRKR. GTP contacts are provided by residues Arg-304, 330–332, and 412–414; these read KLD and GVG.

The protein belongs to the adenylosuccinate synthetase family. In terms of assembly, homodimer. Requires Mg(2+) as cofactor.

It is found in the cytoplasm. The catalysed reaction is IMP + L-aspartate + GTP = N(6)-(1,2-dicarboxyethyl)-AMP + GDP + phosphate + 2 H(+). The protein operates within purine metabolism; AMP biosynthesis via de novo pathway; AMP from IMP: step 1/2. In terms of biological role, plays an important role in the de novo pathway of purine nucleotide biosynthesis. Catalyzes the first committed step in the biosynthesis of AMP from IMP. This Corynebacterium jeikeium (strain K411) protein is Adenylosuccinate synthetase.